We begin with the raw amino-acid sequence, 146 residues long: Endoribonuclease YbeY (146 aa).

Zn(2+) is bound by residues His-108, His-112, and His-118.

The protein belongs to the endoribonuclease YbeY family. Requires Zn(2+) as cofactor.

It is found in the cytoplasm. Functionally, single strand-specific metallo-endoribonuclease involved in late-stage 70S ribosome quality control and in maturation of the 3' terminus of the 16S rRNA. This chain is Endoribonuclease YbeY, found in Onion yellows phytoplasma (strain OY-M).